Consider the following 562-residue polypeptide: NAD-dependent malic enzyme (562 aa).

Catalysis depends on Tyr-101, which acts as the Proton donor. Arg-154 is an NAD(+) binding site. The Proton acceptor role is filled by Lys-172. A divalent metal cation-binding residues include Glu-243, Asp-244, and Asp-267. NAD(+) is bound by residues Asp-267 and Asn-415.

It belongs to the malic enzymes family. In terms of assembly, homotetramer. The cofactor is Mg(2+). Mn(2+) is required as a cofactor.

It carries out the reaction (S)-malate + NAD(+) = pyruvate + CO2 + NADH. The enzyme catalyses oxaloacetate + H(+) = pyruvate + CO2. In Shewanella sediminis (strain HAW-EB3), this protein is NAD-dependent malic enzyme.